The chain runs to 351 residues: MLYPLVKKYLFSLDAEDAHEKVCKILRTLSKSSFLCSLIHSQWGYKNPKLENEILGLNFPNPLGLAAGFDKNASMLRALIAFGFGYLEAGTLTNEAQVGNERPRLFRHIEEESLQNAMGFNNYGAVLGARSFNRFAPYKTPIGINLGKNKHIEQAHALEDYKAVLNQCLNIGDYYTFNLSSPNTPNLRDLQNKAFVNELFCMAKEMTHKPLFLKIAPDLEIDDMLEIVNSAIEAGAHGIIATNTTIDKSLVFAPKEMGGLSGKCLTKKSREVFKELAKAFFNKSVLVSVGGISDAKEAYERIKMGASLLQIYSAFIYNGPNLCQNILKDLVKLLQKDGFLSVKEAIGADLR.

Residues 67-71 and threonine 91 each bind FMN; that span reads AGFDK. Lysine 71 contributes to the substrate binding site. Position 116 to 120 (116 to 120) interacts with substrate; it reads NAMGF. Asparagine 145 and asparagine 178 together coordinate FMN. Asparagine 178 is a substrate binding site. Serine 181 serves as the catalytic Nucleophile. Asparagine 183 serves as a coordination point for substrate. Residues lysine 214 and threonine 242 each contribute to the FMN site. 243–244 is a substrate binding site; that stretch reads NT. FMN is bound by residues glycine 262, glycine 291, and 312 to 313; that span reads YS.

The protein belongs to the dihydroorotate dehydrogenase family. Type 2 subfamily. Monomer. FMN serves as cofactor.

The protein resides in the cell membrane. The enzyme catalyses (S)-dihydroorotate + a quinone = orotate + a quinol. Its pathway is pyrimidine metabolism; UMP biosynthesis via de novo pathway; orotate from (S)-dihydroorotate (quinone route): step 1/1. Catalyzes the conversion of dihydroorotate to orotate with quinone as electron acceptor. This is Dihydroorotate dehydrogenase (quinone) from Helicobacter pylori (strain G27).